A 342-amino-acid polypeptide reads, in one-letter code: Dihydroorotase (342 aa).

Histidine 13 and histidine 15 together coordinate Zn(2+). Residues 15–17 (HLR) and asparagine 41 contribute to the substrate site. The Zn(2+) site is built by lysine 98, histidine 135, and histidine 173. The residue at position 98 (lysine 98) is an N6-carboxylysine. Substrate is bound at residue histidine 135. Leucine 218 provides a ligand contact to substrate. Aspartate 246 contributes to the Zn(2+) binding site. Aspartate 246 is a catalytic residue. Positions 250 and 262 each coordinate substrate.

It belongs to the metallo-dependent hydrolases superfamily. DHOase family. Class II DHOase subfamily. Homodimer. Requires Zn(2+) as cofactor.

It catalyses the reaction (S)-dihydroorotate + H2O = N-carbamoyl-L-aspartate + H(+). It participates in pyrimidine metabolism; UMP biosynthesis via de novo pathway; (S)-dihydroorotate from bicarbonate: step 3/3. Catalyzes the reversible cyclization of carbamoyl aspartate to dihydroorotate. The protein is Dihydroorotase of Vibrio atlanticus (strain LGP32) (Vibrio splendidus (strain Mel32)).